The sequence spans 212 residues: Glycerol-3-phosphate acyltransferase (212 aa).

Helical transmembrane passes span 3 to 23 (IIIM…LWIG), 70 to 90 (IPII…FAII), 110 to 130 (AGVL…IFLL), 143 to 163 (ITVA…GFIL), and 164 to 184 (TDYD…IIIR).

It belongs to the PlsY family. In terms of assembly, probably interacts with PlsX.

The protein localises to the cell membrane. The enzyme catalyses an acyl phosphate + sn-glycerol 3-phosphate = a 1-acyl-sn-glycero-3-phosphate + phosphate. It participates in lipid metabolism; phospholipid metabolism. Functionally, catalyzes the transfer of an acyl group from acyl-phosphate (acyl-PO(4)) to glycerol-3-phosphate (G3P) to form lysophosphatidic acid (LPA). This enzyme utilizes acyl-phosphate as fatty acyl donor, but not acyl-CoA or acyl-ACP. The polypeptide is Glycerol-3-phosphate acyltransferase (Streptococcus agalactiae serotype III (strain NEM316)).